Here is a 177-residue protein sequence, read N- to C-terminus: MPIKSRIRTVPDYPKKGIMFRDITTLIKDPVGFRLVIDNMTQHYLSNGVDFDAIVGIESRGFILGGALAYTLGKGFVPVRKPGKLPADVVQLEYELEYGTDKIEMHTDALVQGQRVLLVDDLLATGGTALAAAGLVEKLGGVVASMAFIVNLPDIGGEKKIREKGYNIYFLTEFEGD.

This sequence belongs to the purine/pyrimidine phosphoribosyltransferase family. Homodimer.

The protein localises to the cytoplasm. The catalysed reaction is AMP + diphosphate = 5-phospho-alpha-D-ribose 1-diphosphate + adenine. It functions in the pathway purine metabolism; AMP biosynthesis via salvage pathway; AMP from adenine: step 1/1. Functionally, catalyzes a salvage reaction resulting in the formation of AMP, that is energically less costly than de novo synthesis. This chain is Adenine phosphoribosyltransferase, found in Chlorobaculum tepidum (strain ATCC 49652 / DSM 12025 / NBRC 103806 / TLS) (Chlorobium tepidum).